A 330-amino-acid polypeptide reads, in one-letter code: Negative regulator of the PHO system (330 aa).

Residues 8–290 enclose the Protein kinase domain; the sequence is FQQLEKLGEG…ARQALQHPWF (283 aa). ATP-binding positions include 14–22 and lysine 37; that span reads LGEGTYATV. Aspartate 131 functions as the Proton acceptor in the catalytic mechanism. Positions 300–330 are disordered; that stretch reads MQHLADPYQQSQQQSQQQAQQSQQMDPQTYR. The segment covering 308-323 has biased composition (low complexity); it reads QQSQQQSQQQAQQSQQ.

It belongs to the protein kinase superfamily. CMGC Ser/Thr protein kinase family. CDC2/CDKX subfamily. In terms of assembly, interacts with a number of cyclins.

The enzyme catalyses L-seryl-[protein] + ATP = O-phospho-L-seryl-[protein] + ADP + H(+). It carries out the reaction L-threonyl-[protein] + ATP = O-phospho-L-threonyl-[protein] + ADP + H(+). When phosphate concentrations are high it phosphorylates the PHO4 transcription factor thus establishing repression. The polypeptide is Negative regulator of the PHO system (PHO85) (Debaryomyces hansenii (strain ATCC 36239 / CBS 767 / BCRC 21394 / JCM 1990 / NBRC 0083 / IGC 2968) (Yeast)).